A 590-amino-acid polypeptide reads, in one-letter code: Aspartate--tRNA(Asp/Asn) ligase (590 aa).

Glutamate 175 serves as a coordination point for L-aspartate. The interval 199–202 (QQFK) is aspartate. 2 residues coordinate L-aspartate: arginine 221 and histidine 452. Residue 221–223 (RDE) participates in ATP binding. Position 485 (glutamate 485) interacts with ATP. Arginine 492 is an L-aspartate binding site. 537–540 (GIDR) contacts ATP.

Belongs to the class-II aminoacyl-tRNA synthetase family. Type 1 subfamily. As to quaternary structure, homodimer.

It is found in the cytoplasm. It catalyses the reaction tRNA(Asx) + L-aspartate + ATP = L-aspartyl-tRNA(Asx) + AMP + diphosphate. In terms of biological role, aspartyl-tRNA synthetase with relaxed tRNA specificity since it is able to aspartylate not only its cognate tRNA(Asp) but also tRNA(Asn). Reaction proceeds in two steps: L-aspartate is first activated by ATP to form Asp-AMP and then transferred to the acceptor end of tRNA(Asp/Asn). The protein is Aspartate--tRNA(Asp/Asn) ligase of Dinoroseobacter shibae (strain DSM 16493 / NCIMB 14021 / DFL 12).